The following is a 261-amino-acid chain: CD40 ligand (261 aa).

Residues methionine 1–lysine 22 are Cytoplasmic-facing. The helical; Signal-anchor for type II membrane protein transmembrane segment at isoleucine 23–leucine 46 threads the bilayer. Residues histidine 47–leucine 261 are Extracellular-facing. A THD domain is found at isoleucine 122–leucine 261. Residues cysteine 178 and cysteine 218 are joined by a disulfide bond. A glycan (N-linked (GlcNAc...) (complex) asparagine; alternate) is linked at asparagine 240. A glycan (N-linked (GlcNAc...) (high mannose) asparagine; alternate) is linked at asparagine 240.

This sequence belongs to the tumor necrosis factor family. In terms of assembly, homotrimer. Interacts with isoform 3 of CD28. CD40 ligand, soluble form: Exists as either a monomer or a homotrimer. Forms a ternary complex between CD40 and integrins for CD40-CD40LG signaling. The soluble form derives from the membrane form by proteolytic processing. Post-translationally, N-linked glycan is a mixture of high mannose and complex type. Glycan structure does not influence binding affinity to CD40. In terms of processing, not O-glycosylated. In terms of tissue distribution, specifically expressed on activated CD4+ T-lymphocytes.

Its subcellular location is the cell membrane. It is found in the cell surface. The protein resides in the secreted. Cytokine that acts as a ligand to CD40/TNFRSF5. Costimulates T-cell proliferation and cytokine production. Its cross-linking on T-cells generates a costimulatory signal which enhances the production of IL4 and IL10 in conjunction with the TCR/CD3 ligation and CD28 costimulation. Induces the activation of NF-kappa-B. Induces the activation of kinases MAPK8 and PAK2 in T-cells. Induces tyrosine phosphorylation of isoform 3 of CD28. Mediates B-cell proliferation in the absence of co-stimulus as well as IgE production in the presence of IL4. Involved in immunoglobulin class switching. In terms of biological role, acts as a ligand for integrins, specifically ITGA5:ITGB1 and ITGAV:ITGB3; both integrins and the CD40 receptor are required for activation of CD40-CD40LG signaling, which have cell-type dependent effects, such as B-cell activation, NF-kappa-B signaling and anti-apoptotic signaling. This is CD40 ligand (CD40LG) from Homo sapiens (Human).